The primary structure comprises 329 residues: Cytochrome f (329 aa).

An N-terminal signal peptide occupies residues 1–44 (MKRNIIFLVIHQFENLTMKKKQNIFFIFLLTVFFNFTVNSNVSA). Heme-binding residues include Y45, C65, C68, and H69. Residues 295-315 (VQGLIIFLITIFITQLFLVLK) traverse the membrane as a helical segment.

Belongs to the cytochrome f family. The 4 large subunits of the cytochrome b6-f complex are cytochrome b6, subunit IV (17 kDa polypeptide, petD), cytochrome f and the Rieske protein, while the 4 small subunits are PetG, PetL, PetM and PetN. The complex functions as a dimer. Requires heme as cofactor.

It localises to the plastid. It is found in the chloroplast thylakoid membrane. Functionally, component of the cytochrome b6-f complex, which mediates electron transfer between photosystem II (PSII) and photosystem I (PSI), cyclic electron flow around PSI, and state transitions. This chain is Cytochrome f, found in Tupiella akineta (Green alga).